The primary structure comprises 185 residues: uncharacterized protein (185 aa).

3 helical membrane-spanning segments follow: residues 9–29 (LVAAGLVLHIIQWIFILWAFL), 72–92 (VLFFALVLLIYGIVLHAILIV), and 111–131 (FFFIAAGVKLAILNITGIPFL).

The protein resides in the cell membrane. This is an uncharacterized protein from Bacillus subtilis (strain 168).